The chain runs to 259 residues: 14-3-3-like protein (259 aa).

The disordered stretch occupies residues 238–259 (MQDPAAGDDREGADMKVEDAEP). Residues 244 to 259 (GDDREGADMKVEDAEP) are compositionally biased toward basic and acidic residues.

This sequence belongs to the 14-3-3 family.

In Chlamydomonas reinhardtii (Chlamydomonas smithii), this protein is 14-3-3-like protein.